The primary structure comprises 256 residues: Floral homeotic protein APETALA 1-1 (256 aa).

Positions 1-61 constitute an MADS-box domain; sequence MGRGRVQLKR…GKLFEYSTDS (61 aa). A K-box domain is found at 88–178; it reads NTNWSMEYNR…SKQIKEREKV (91 aa).

In terms of assembly, homodimer capable of binding to CArG-box sequences. Expressed in some of the meristems of arrest-stage broccoli heads.

The protein resides in the nucleus. Functionally, transcription factor that promotes early floral meristem identity in synergy with LEAFY. Displays a redundant function with CAULIFLOWER in the up-regulation of LEAFY. Required subsequently for the transition of an inflorescence meristem into a floral meristem, and for the normal development of sepals and petals in flowers. Regulates positively B class homeotic proteins. In Brassica oleracea var. italica (Broccoli), this protein is Floral homeotic protein APETALA 1-1 (1AP1).